We begin with the raw amino-acid sequence, 193 residues long: uncharacterized protein (193 aa).

This is an uncharacterized protein from Haemophilus influenzae (strain ATCC 51907 / DSM 11121 / KW20 / Rd).